The chain runs to 202 residues: Dephospho-CoA kinase (202 aa).

The region spanning 6-202 is the DPCK domain; that stretch reads KISVTGDPSS…QCFKALKGTI (197 aa). ATP is bound at residue 14 to 19; that stretch reads SSGKTE.

It belongs to the CoaE family.

Its subcellular location is the cytoplasm. The enzyme catalyses 3'-dephospho-CoA + ATP = ADP + CoA + H(+). Its pathway is cofactor biosynthesis; coenzyme A biosynthesis; CoA from (R)-pantothenate: step 5/5. Its function is as follows. Catalyzes the phosphorylation of the 3'-hydroxyl group of dephosphocoenzyme A to form coenzyme A. This Chlamydia trachomatis serovar A (strain ATCC VR-571B / DSM 19440 / HAR-13) protein is Dephospho-CoA kinase.